The chain runs to 720 residues: TAL effector protein Rip19 (720 aa).

Disordered stretches follow at residues 13–85 (SVSL…PSLV) and 175–205 (QAFA…PTFL). Residues 67-85 (PRRPLPVAPASAPPAPSLV) show a composition bias toward pro residues. The Nuclear localization signal 1 signature appears at 185 to 191 (RSARARR). The stretch at 286–320 (LTRAHIVDIARQRSGDLALQALLPVATALTAAPLR) is one Cryptic repeat -1 repeat. One copy of the Cryptic repeat 0 repeat lies at 321 to 354 (LSASQIATVAQYGERPAIQALYRLRRKLTRAPLH). A Core repeat 1 repeat occupies 355 to 389 (LTPQQVVAIASHDGGKPALEAVWAKLPVLRGVPYA). The stretch at 390 to 423 (LSTAQVVAIACISGQQALEAIEAHMPTLRQAPHS) is one Cryptic repeat +1 repeat. A Cryptic repeat +2 repeat occupies 424–457 (LSPERVAAIACIGGRSAVEAVRQGLPVKAIRRIR). 3 consecutive short sequence motifs (nuclear localization signal) follow at residues 455-458 (RIRR), 583-586 (HRKR), and 620-623 (RRKR). Residues 571–611 (SPGMAGQSACSPHRKRPAETAIAPRSIRRRPNNAGQPSEPW) are disordered.

This sequence belongs to the transcription activator-like effector (TALE) family. RipTAL/RTL subfamily.

The protein resides in the secreted. It is found in the host nucleus. Functionally, does not activate plant gene transcription, because it has too few core repeats. This Ralstonia solanacearum (Pseudomonas solanacearum) protein is TAL effector protein Rip19.